We begin with the raw amino-acid sequence, 137 residues long: 14 kDa proline-rich protein DC2.15 (137 aa).

Residues 1–25 form the signal peptide; that stretch reads MGSKNSASVALFFTLNILFFALVSS. Positions 30–53 are disordered; the sequence is PDPYKPKPKPTPKPTPTPYPSAGK. The span at 38–48 shows a compositional bias: pro residues; that stretch reads KPTPKPTPTPY. A helical membrane pass occupies residues 88-104; that stretch reads LEGLVNLEAAVCLCTAI.

Its subcellular location is the membrane. Its function is as follows. May be connected with the initiation of embryogenesis or with the metabolic changes produced by the removal of auxins. The protein is 14 kDa proline-rich protein DC2.15 of Daucus carota (Wild carrot).